A 620-amino-acid chain; its full sequence is MALLQIAEPGQSAAPHQHRLAVGIDLGTTNSLVAAVRSGVTATLPDENGQHSLPSIVRYTQDGIEVGQVAALSSAQDPKNTIVSVKRFMGRSLTDIQSGEQAFPYQFEASENGLPLFVTPQGQVNPVQVSAEILRPLVERAEKTLGGELQGVVITVPAYFDDAQRQGTKDAASLLGVKVLRLLNEPTAAAIAYGLDSKQEGVIAIYDLGGGTFDISILRLNRGVFEVLATGGDSALGGDDFDHLLQAHMQQVWQLTNLDPQLSRQLLIEARRVKEALTDASDVEASLTLADGTVLKQVVTKAEFDNLISALVKKTIASCRRTLRDAGVTADEVLETVMVGGSTRVPLVREQVEAFFGKAPLTSIDPDRVVAIGAAIQADILVGNKPESELLLLDVIPLSLGIETMGGLVEKVVSRNTTIPVARAQEFTTFKDGQTAMAFHVVQGERELVDDCRSLARFTLKGIPPLAAGAAHIRVTFQVDADGLLSVTAMEKSTGVQSSIQVKPSFGLSDTEIATMLKDSMKHAKEDISRRMLAEQQVEAARVLESLNAALAKDGDLLTSDERQQIDAVMAQLAEIARGDDADAIKQAIEVLDEHTQDFAAKRMDNSIRVAFKGQSIDNI.

This sequence belongs to the heat shock protein 70 family.

Chaperone involved in the maturation of iron-sulfur cluster-containing proteins. Has a low intrinsic ATPase activity which is markedly stimulated by HscB. This Shewanella sp. (strain MR-4) protein is Chaperone protein HscA homolog.